The chain runs to 242 residues: MEFDPVKINTSSIDHVTILQYIDEPNDIRLTVCIIRNVNNITYYINITKINPHLANRFRAWKKRIAGRDYMTNLSRDTGIQQSKLTETIRNCQKNKNIYGLYIHYNLVINVVIDWITDVIVQSILRGLVNWYIANNTYTPNTPNNTTTISELDIIKILDKYEDMYRVSKEKECGICYEVVYSKRLENDRYFGLLDSCNHIFCITCINIWHRTRRETGASDNCPICRTRFKKITMSKFYKLVN.

The region spanning 21-131 (YIDEPNDIRL…QSILRGLVNW (111 aa)) is the KilA-N domain. Residues 173-226 (CGICYEVVYSKRLENDRYFGLLDSCNHIFCITCINIWHRTRRETGASDNCPICR) form an RING-type zinc finger.

Belongs to the orthopoxvirus OPG021 family.

The protein resides in the host cytoplasm. The catalysed reaction is S-ubiquitinyl-[E2 ubiquitin-conjugating enzyme]-L-cysteine + [acceptor protein]-L-lysine = [E2 ubiquitin-conjugating enzyme]-L-cysteine + N(6)-ubiquitinyl-[acceptor protein]-L-lysine.. Its function is as follows. RING-finger E3 ubiquitin ligase which catalyzes the formation of both 'Lys-48'- and 'Lys-63'-linked polyubiquitin chains. Plays an important role in virulence by acting as an anti-apoptotic factor. This Monkeypox virus protein is Host range factor p28 (OPG021).